The chain runs to 107 residues: MIIHFNKHSKKIILNIFLALLLVYFIFHCIYGNKGIIAYLKVNRQLEKAYDELKNLRAERVELEHNVKLLRTESLNKDMLEEQAKKILGIAAPNEQVFTIKDIASQR.

Residues 12–32 traverse the membrane as a helical segment; that stretch reads IILNIFLALLLVYFIFHCIYG.

It is found in the membrane. This is an uncharacterized protein from Rickettsia prowazekii (strain Madrid E).